We begin with the raw amino-acid sequence, 141 residues long: Hemoglobin subunit alpha-A (141 aa).

The Globin domain occupies 1–141; it reads VLSAADKANV…VGAVLTAKYR (141 aa). O2 is bound at residue H58. H87 is a binding site for heme b.

This sequence belongs to the globin family. As to quaternary structure, heterotetramer of two alpha chains and two beta chains. As to expression, red blood cells.

Its function is as follows. Involved in oxygen transport from the lung to the various peripheral tissues. The sequence is that of Hemoglobin subunit alpha-A (HBAA) from Chloephaga melanoptera (Andean goose).